Consider the following 156-residue polypeptide: Small ribosomal subunit protein uS7 (156 aa).

This sequence belongs to the universal ribosomal protein uS7 family. As to quaternary structure, part of the 30S ribosomal subunit. Contacts proteins S9 and S11.

One of the primary rRNA binding proteins, it binds directly to 16S rRNA where it nucleates assembly of the head domain of the 30S subunit. Is located at the subunit interface close to the decoding center, probably blocks exit of the E-site tRNA. This is Small ribosomal subunit protein uS7 from Chromobacterium violaceum (strain ATCC 12472 / DSM 30191 / JCM 1249 / CCUG 213 / NBRC 12614 / NCIMB 9131 / NCTC 9757 / MK).